We begin with the raw amino-acid sequence, 217 residues long: Elongation factor Ts (217 aa).

Residues 82–85 (TDFV) form an involved in Mg(2+) ion dislocation from EF-Tu region.

The protein belongs to the EF-Ts family.

The protein resides in the cytoplasm. Associates with the EF-Tu.GDP complex and induces the exchange of GDP to GTP. It remains bound to the aminoacyl-tRNA.EF-Tu.GTP complex up to the GTP hydrolysis stage on the ribosome. The polypeptide is Elongation factor Ts (Prochlorococcus marinus (strain SARG / CCMP1375 / SS120)).